We begin with the raw amino-acid sequence, 579 residues long: Rho guanine nucleotide exchange factor 25 (579 aa).

Disordered regions lie at residues 27 to 61 (AVPG…GERE) and 172 to 194 (VKAQ…EQKK). The region spanning 199–375 (RSMFVLSELV…CFVPKRCNDM (177 aa)) is the DH domain. Residues 317-338 (LGHRLQLSDLLIKPVQRIMKYQ) form an important for binding to Rho GTPases region. In terms of domain architecture, PH spans 380-499 (RLRGFEGKLT…ESQTNSLGRS (120 aa)). The segment at 472–498 (SQRDFLNALQSPIEYQRRESQTNSLGR) is sufficient to bind activated GNAQ. Disordered regions lie at residues 487-516 (QRRE…VSMH) and 546-579 (LSET…EDEL).

In terms of assembly, interacts with activated GNAQ and GNA11. Interacts with RHOA, CDC42 and RAC1. Interacts (via the DH domain) with POPDC1 (via the C-terminus cytoplasmic tail).

It localises to the cytoplasm. It is found in the myofibril. Its subcellular location is the sarcomere. The protein localises to the cell membrane. Its function is as follows. May play a role in actin cytoskeleton reorganization in different tissues since its activation induces formation of actin stress fibers. It works as a guanine nucleotide exchange factor for Rho family of small GTPases. Links specifically G alpha q/11-coupled receptors to RHOA activation. May be an important regulator of processes involved in axon and dendrite formation. In neurons seems to be an exchange factor primarily for RAC1. Involved in skeletal myogenesis. This is Rho guanine nucleotide exchange factor 25 (Arhgef25) from Rattus norvegicus (Rat).